A 138-amino-acid chain; its full sequence is Basic phospholipase A2 canebraxin B (138 aa).

Positions 1-16 are cleaved as a signal peptide; the sequence is MRALWIVAVLLVAVEG. Intrachain disulfides connect Cys42–Cys131, Cys44–Cys60, Cys59–Cys111, Cys65–Cys138, Cys66–Cys104, Cys73–Cys97, and Cys91–Cys102. Residues Tyr43, Gly45, and Gly47 each coordinate Ca(2+). Residue His63 is part of the active site. Asp64 serves as a coordination point for Ca(2+). The active site involves Asp105.

It belongs to the phospholipase A2 family. Group II subfamily. In terms of assembly, heterodimer of an acidic subunit and a basic chain. The acidic subunit is non-toxic, without enzymatic activity and comprises 3 peptides that are cross-linked by 7 disulfide bridges. The basic subunit is toxic, has phospholipase A2 activity and is composed of a single chain. Requires Ca(2+) as cofactor. As to expression, expressed by the venom gland.

It is found in the secreted. The catalysed reaction is a 1,2-diacyl-sn-glycero-3-phosphocholine + H2O = a 1-acyl-sn-glycero-3-phosphocholine + a fatty acid + H(+). In terms of biological role, snake venom phospholipase A2 (PLA2) that shows presynaptic neurotoxicity. PLA2 catalyzes the calcium-dependent hydrolysis of the 2-acyl groups in 3-sn-phosphoglycerides. The chain is Basic phospholipase A2 canebraxin B from Crotalus horridus (Timber rattlesnake).